The primary structure comprises 695 residues: MAP kinase phosphatase with leucine-rich repeats protein 2 (695 aa).

10 LRR repeats span residues 101-122 (SLKS…ITLL), 124-145 (NLNH…LSQL), 147-167 (SLET…NVCK), 170-191 (SLTS…FLNL), 193-214 (NLKD…LPNN), 215-235 (IEKL…SLIR), 239-260 (SLTT…LSCL), 262-283 (NVKT…VLGS), 286-307 (SLVT…VILL), and 309-330 (NLRI…IPTE). Residues 413-426 (SENNEINENNQLLT) are compositionally biased toward low complexity. Disordered stretches follow at residues 413-438 (SENN…KNDS) and 492-519 (QEQL…QQQQ). The 140-residue stretch at 556 to 695 (VPDLIIDKLY…LKKFEKDLFK (140 aa)) folds into the Tyrosine-protein phosphatase domain. Catalysis depends on Cys639, which acts as the Phosphocysteine intermediate.

This sequence belongs to the protein-tyrosine phosphatase family. Non-receptor class dual specificity subfamily.

The enzyme catalyses O-phospho-L-tyrosyl-[protein] + H2O = L-tyrosyl-[protein] + phosphate. The catalysed reaction is O-phospho-L-seryl-[protein] + H2O = L-seryl-[protein] + phosphate. It carries out the reaction O-phospho-L-threonyl-[protein] + H2O = L-threonyl-[protein] + phosphate. Functionally, probable phosphatase with dual specificity toward Ser/Thr and Tyr-containing proteins. The protein is MAP kinase phosphatase with leucine-rich repeats protein 2 (mpl2) of Dictyostelium discoideum (Social amoeba).